Consider the following 247-residue polypeptide: Protein NipSnap homolog 3B (247 aa).

4 positions are modified to N6-succinyllysine: Lys45, Lys48, Lys57, and Lys166.

This sequence belongs to the NipSnap family.

The protein localises to the cytoplasm. The protein resides in the cytosol. In Mus musculus (Mouse), this protein is Protein NipSnap homolog 3B (Nipsnap3b).